The chain runs to 534 residues: Tyrosine-protein kinase Fyn (534 aa).

Gly-2 carries N-myristoyl glycine lipidation. S-palmitoyl cysteine attachment occurs at residues Cys-3 and Cys-6. Phosphothreonine; by PKC is present on Thr-12. The segment at 15-39 is disordered; that stretch reads TDERDGSLTQSSGYRYGTDPTPQHY. An SH3 domain is found at 82–143; the sequence is TGVTLFEALY…PSNYVAPVDS (62 aa). An SH2 domain is found at 149–246; that stretch reads WYFGKLGRKD…GLCFNLTVIA (98 aa). The Protein kinase domain maps to 268-521; it reads LFLEQKLGQG…YLQGFLEDYF (254 aa). ATP contacts are provided by residues 274–282 and Lys-296; that span reads LGQGCFAEV. Residue Asp-387 is the Proton acceptor of the active site. Tyr-417 is subject to Phosphotyrosine; by autocatalysis. Residue Tyr-528 is modified to Phosphotyrosine.

The protein belongs to the protein kinase superfamily. Tyr protein kinase family. SRC subfamily. In terms of assembly, associates through its SH3 domain, to the p85 subunit of phosphatidylinositol 3-kinase. Mn(2+) is required as a cofactor. Thymus and spleen.

The protein localises to the cytoplasm. Its subcellular location is the nucleus. The protein resides in the cell membrane. It localises to the perikaryon. The catalysed reaction is L-tyrosyl-[protein] + ATP = O-phospho-L-tyrosyl-[protein] + ADP + H(+). Its activity is regulated as follows. Inhibited by phosphorylation of Tyr-528 by leukocyte common antigen and activated by dephosphorylation of this site. In terms of biological role, tyrosine-protein kinase implicated in the control of cell growth. Plays a role in the regulation of intracellular calcium levels. Required in brain development and mature brain function with important roles in the regulation of axon growth, axon guidance, and neurite extension. Role in CNTN1-mediated signaling. This is Tyrosine-protein kinase Fyn (FYN) from Gallus gallus (Chicken).